The sequence spans 362 residues: 3-dehydroquinate synthase (362 aa).

Residues D71–K76, G105–D109, T129–T130, K142, K151, and C169–T172 contribute to the NAD(+) site. Residues E184, H247, and H264 each coordinate Zn(2+).

Belongs to the sugar phosphate cyclases superfamily. Dehydroquinate synthase family. NAD(+) is required as a cofactor. Requires Co(2+) as cofactor. Zn(2+) serves as cofactor.

It is found in the cytoplasm. It carries out the reaction 7-phospho-2-dehydro-3-deoxy-D-arabino-heptonate = 3-dehydroquinate + phosphate. The protein operates within metabolic intermediate biosynthesis; chorismate biosynthesis; chorismate from D-erythrose 4-phosphate and phosphoenolpyruvate: step 2/7. Catalyzes the conversion of 3-deoxy-D-arabino-heptulosonate 7-phosphate (DAHP) to dehydroquinate (DHQ). The protein is 3-dehydroquinate synthase of Shigella flexneri.